Here is a 188-residue protein sequence, read N- to C-terminus: Pyridoxal 5'-phosphate synthase subunit PdxT (188 aa).

47–49 (GES) contacts L-glutamine. The active-site Nucleophile is the Cys79. L-glutamine is bound by residues Arg105 and 134–135 (IR). Active-site charge relay system residues include His170 and Glu172.

This sequence belongs to the glutaminase PdxT/SNO family. In terms of assembly, in the presence of PdxS, forms a dodecamer of heterodimers. Only shows activity in the heterodimer.

The catalysed reaction is aldehydo-D-ribose 5-phosphate + D-glyceraldehyde 3-phosphate + L-glutamine = pyridoxal 5'-phosphate + L-glutamate + phosphate + 3 H2O + H(+). The enzyme catalyses L-glutamine + H2O = L-glutamate + NH4(+). It participates in cofactor biosynthesis; pyridoxal 5'-phosphate biosynthesis. Catalyzes the hydrolysis of glutamine to glutamate and ammonia as part of the biosynthesis of pyridoxal 5'-phosphate. The resulting ammonia molecule is channeled to the active site of PdxS. The polypeptide is Pyridoxal 5'-phosphate synthase subunit PdxT (Listeria innocua serovar 6a (strain ATCC BAA-680 / CLIP 11262)).